We begin with the raw amino-acid sequence, 714 residues long: K(+)-insensitive pyrophosphate-energized proton pump (714 aa).

A signal peptide spans 1 to 20 (MRMTVIPIVILCGVLSVVYA). 4 helical membrane passes run 52-74 (LTRQ…WYLL), 85-105 (GAVL…RANL), 128-148 (ITGM…YFVL), and 166-186 (VSLG…GGIF). K188 is a binding site for substrate. Residues D191, D195, N218, and D221 each contribute to the Mg(2+) site. The next 6 helical transmembrane spans lie at 238-258 (AVSV…TPIL), 263-283 (VYPL…TFFV), 298-318 (GLIA…YATV), 333-353 (GTNL…IVVI), 383-403 (GLAV…GGII), and 411-431 (LFGT…IVAL). D439 is a binding site for Mg(2+). The next 4 helical transmembrane spans lie at 470-490 (AVTK…LFAA), 522-542 (YVVA…GIAM), 591-611 (VIPS…VLLI), and 618-638 (AFAA…FVAI). D648, D680, and D684 together coordinate Ca(2+). K687 serves as a coordination point for substrate. A helical transmembrane segment spans residues 693 to 713 (AVNPAIKITNIVALLLLAVLA).

Belongs to the H(+)-translocating pyrophosphatase (TC 3.A.10) family. K(+)-insensitive subfamily. Homodimer. Mg(2+) is required as a cofactor.

It localises to the acidocalcisome membrane. It carries out the reaction diphosphate + H2O + H(+)(in) = 2 phosphate + 2 H(+)(out). Functionally, proton pump that utilizes the energy of pyrophosphate hydrolysis as the driving force for proton movement across the membrane. Generates a proton motive force. The sequence is that of K(+)-insensitive pyrophosphate-energized proton pump from Agrobacterium fabrum (strain C58 / ATCC 33970) (Agrobacterium tumefaciens (strain C58)).